The chain runs to 272 residues: Ethanolamine ammonia-lyase small subunit (272 aa).

Adenosylcob(III)alamin is bound by residues valine 161, glutamate 182, and cysteine 211.

It belongs to the EutC family. As to quaternary structure, the basic unit is a heterodimer which dimerizes to form tetramers. The heterotetramers trimerize; 6 large subunits form a core ring with 6 small subunits projecting outwards. It depends on adenosylcob(III)alamin as a cofactor.

The protein resides in the bacterial microcompartment. The enzyme catalyses ethanolamine = acetaldehyde + NH4(+). The protein operates within amine and polyamine degradation; ethanolamine degradation. In terms of biological role, catalyzes the deamination of various vicinal amino-alcohols to oxo compounds. Allows this organism to utilize ethanolamine as the sole source of nitrogen and carbon in the presence of external vitamin B12. The protein is Ethanolamine ammonia-lyase small subunit of Pseudomonas putida (strain GB-1).